A 326-amino-acid chain; its full sequence is Glycerol-3-phosphate dehydrogenase [NAD(P)+] (326 aa).

Residues S10, F11, R31, and K108 each contribute to the NADPH site. Residues K108, G136, and S138 each contribute to the sn-glycerol 3-phosphate site. A140 contributes to the NADPH binding site. Residues K191, D246, S256, R257, and N258 each contribute to the sn-glycerol 3-phosphate site. The active-site Proton acceptor is K191. Position 257 (R257) interacts with NADPH. NADPH-binding residues include I281 and E283.

This sequence belongs to the NAD-dependent glycerol-3-phosphate dehydrogenase family.

The protein resides in the cytoplasm. The catalysed reaction is sn-glycerol 3-phosphate + NAD(+) = dihydroxyacetone phosphate + NADH + H(+). The enzyme catalyses sn-glycerol 3-phosphate + NADP(+) = dihydroxyacetone phosphate + NADPH + H(+). It participates in membrane lipid metabolism; glycerophospholipid metabolism. Functionally, catalyzes the reduction of the glycolytic intermediate dihydroxyacetone phosphate (DHAP) to sn-glycerol 3-phosphate (G3P), the key precursor for phospholipid synthesis. This is Glycerol-3-phosphate dehydrogenase [NAD(P)+] from Ehrlichia chaffeensis (strain ATCC CRL-10679 / Arkansas).